Consider the following 199-residue polypeptide: Recombination protein RecR (199 aa).

Residues 57-72 form a C4-type zinc finger; the sequence is CSVCGNITEQDPCAIC. Positions 80–176 constitute a Toprim domain; sequence STIMVVEEAK…KVTRLAAGLA (97 aa).

It belongs to the RecR family.

Functionally, may play a role in DNA repair. It seems to be involved in an RecBC-independent recombinational process of DNA repair. It may act with RecF and RecO. This Lactobacillus delbrueckii subsp. bulgaricus (strain ATCC BAA-365 / Lb-18) protein is Recombination protein RecR.